The sequence spans 100 residues: Small ribosomal subunit protein uS14c (100 aa).

It belongs to the universal ribosomal protein uS14 family. As to quaternary structure, part of the 30S ribosomal subunit.

It localises to the plastid. Its subcellular location is the chloroplast. In terms of biological role, binds 16S rRNA, required for the assembly of 30S particles. This chain is Small ribosomal subunit protein uS14c, found in Pleurastrum terricola (Filamentous green alga).